A 216-amino-acid polypeptide reads, in one-letter code: Protein GrpE (216 aa).

Disordered regions lie at residues 1 to 45 (MTEE…LDPT) and 185 to 216 (RVAVAEPQPGATPAAAKEEKTDDEESGGTEEV). The span at 205–216 (TDDEESGGTEEV) shows a compositional bias: acidic residues.

Belongs to the GrpE family. In terms of assembly, homodimer.

Its subcellular location is the cytoplasm. Functionally, participates actively in the response to hyperosmotic and heat shock by preventing the aggregation of stress-denatured proteins, in association with DnaK and GrpE. It is the nucleotide exchange factor for DnaK and may function as a thermosensor. Unfolded proteins bind initially to DnaJ; upon interaction with the DnaJ-bound protein, DnaK hydrolyzes its bound ATP, resulting in the formation of a stable complex. GrpE releases ADP from DnaK; ATP binding to DnaK triggers the release of the substrate protein, thus completing the reaction cycle. Several rounds of ATP-dependent interactions between DnaJ, DnaK and GrpE are required for fully efficient folding. The protein is Protein GrpE of Streptomyces griseus subsp. griseus (strain JCM 4626 / CBS 651.72 / NBRC 13350 / KCC S-0626 / ISP 5235).